The primary structure comprises 560 residues: 2-isopropylmalate synthase (560 aa).

In terms of domain architecture, Pyruvate carboxyltransferase spans 30-303; it reads PVWCSVDLRD…DPEIDCSNIE (274 aa). Mg(2+)-binding residues include aspartate 39, histidine 242, histidine 244, and asparagine 278. Residues 437–560 are regulatory domain; the sequence is QPEGRLRFVD…RVLDVKAGKA (124 aa).

This sequence belongs to the alpha-IPM synthase/homocitrate synthase family. LeuA type 2 subfamily. As to quaternary structure, homodimer. Mg(2+) serves as cofactor.

Its subcellular location is the cytoplasm. It catalyses the reaction 3-methyl-2-oxobutanoate + acetyl-CoA + H2O = (2S)-2-isopropylmalate + CoA + H(+). It participates in amino-acid biosynthesis; L-leucine biosynthesis; L-leucine from 3-methyl-2-oxobutanoate: step 1/4. In terms of biological role, catalyzes the condensation of the acetyl group of acetyl-CoA with 3-methyl-2-oxobutanoate (2-ketoisovalerate) to form 3-carboxy-3-hydroxy-4-methylpentanoate (2-isopropylmalate). This is 2-isopropylmalate synthase from Rhizobium johnstonii (strain DSM 114642 / LMG 32736 / 3841) (Rhizobium leguminosarum bv. viciae).